The sequence spans 255 residues: ParA family protein TC_0871 (255 aa).

Belongs to the ParA family.

This Chlamydia muridarum (strain MoPn / Nigg) protein is ParA family protein TC_0871.